The following is a 123-amino-acid chain: Small ribosomal subunit protein bS16 (123 aa).

The protein belongs to the bacterial ribosomal protein bS16 family.

In Treponema pallidum (strain Nichols), this protein is Small ribosomal subunit protein bS16.